The primary structure comprises 602 residues: DEAD-box ATP-dependent RNA helicase 53 (602 aa).

Residues 33-43 (ASPLDPCRGPA) are compositionally biased toward low complexity. The tract at residues 33–76 (ASPLDPCRGPAAPEPPRRRAFHGSPSPLGFRSTPASWSSPEAGA) is disordered. Residues 84-112 (LEVARLGISPWIVERLAARGITRLFPIQR) carry the Q motif motif. One can recognise a Helicase ATP-binding domain in the interval 115–288 (LDPAMQGKDM…SKYLKDPIII (174 aa)). 128–135 (ARTGTGKT) contacts ATP. Residues 236–239 (DEAD) carry the DEAD box motif. The region spanning 317–462 (ILGPLIKEHA…LPKIEVADEA (146 aa)) is the Helicase C-terminal domain. Residues 503–602 (FGDFDGFGSS…GRSGGFDDSN (100 aa)) form a disordered region.

It belongs to the DEAD box helicase family. DDX21/DDX50 subfamily.

It carries out the reaction ATP + H2O = ADP + phosphate + H(+). In Oryza sativa subsp. japonica (Rice), this protein is DEAD-box ATP-dependent RNA helicase 53.